A 415-amino-acid polypeptide reads, in one-letter code: Casein kinase I isoform delta (415 aa).

The Protein kinase domain occupies 9–277 (YRLGRKIGSG…YLRQLFRNLF (269 aa)). ATP is bound by residues 15-23 (IGSGSFGDI) and Lys38. The active-site Proton acceptor is Asp128. The centrosomal localization signal (CLS) stretch occupies residues 278–364 (HRQGFSYDYV…TSPRPVSGME (87 aa)). Residues 301 to 315 (ADDAERERRDREERL) show a composition bias toward basic and acidic residues. Residues 301-415 (ADDAERERRD…SSGLQSVVHR (115 aa)) form a disordered region. Residues 317–342 (HSRNPATRGLPSTASGRLRGTQEVAP) form an autoinhibitory region. A phosphoserine mark is found at Ser328 and Ser331. The segment covering 347 to 358 (TPTSHTANTSPR) has biased composition (polar residues). Residue Ser370 is modified to Phosphoserine. Position 375 is an omega-N-methylarginine (Arg375). A compositionally biased stretch (polar residues) spans 380-400 (NISSSDLTGRQDTSRMSTSQI). A phosphoserine mark is found at Ser382, Ser383, Ser384, Ser407, and Ser411.

Belongs to the protein kinase superfamily. CK1 Ser/Thr protein kinase family. Casein kinase I subfamily. Monomer. Component of the circadian core oscillator, which includes the CRY proteins, CLOCK, or NPAS2, ARTNL/BMAL1 or ARTNL2/BMAL2, CSNK1D and/or CSNK1E, TIMELESS and the PER proteins. Interacts with DNMT1 and MAP1A. Interacts directly with PER1 and PER2 which may lead to their degradation. Interacts with MAPT/TAU, SNAPIN, DBNDD2, AIB1/NCOA3 and ESR1. Interacts with AKAP9/AKAP450; this interaction promotes centrosomal subcellular location. Binds to tubulins in mitotic cells upon DNA damage. Interacts with GJA1. Interacts with DDX3X; this interaction enhances CSNK1D kinase activity in vitro, but it is unclear whether this interaction is physiologically relevant. Interacts with FAM83A, FAM83B, FAM83E and FAM83H (via DUF1669). Post-translationally, autophosphorylated on serine and threonine residues; this autophosphorylation represses activity. Reactivated by phosphatase-mediated dephosphorylation. May be dephosphorylated by PP1.

The protein resides in the cytoplasm. It is found in the nucleus. Its subcellular location is the cytoskeleton. It localises to the microtubule organizing center. The protein localises to the centrosome. The protein resides in the perinuclear region. It is found in the cell membrane. Its subcellular location is the spindle. It localises to the golgi apparatus. The enzyme catalyses L-seryl-[protein] + ATP = O-phospho-L-seryl-[protein] + ADP + H(+). It carries out the reaction L-threonyl-[protein] + ATP = O-phospho-L-threonyl-[protein] + ADP + H(+). The catalysed reaction is L-seryl-[tau protein] + ATP = O-phospho-L-seryl-[tau protein] + ADP + H(+). It catalyses the reaction L-threonyl-[tau protein] + ATP = O-phospho-L-threonyl-[tau protein] + ADP + H(+). With respect to regulation, exhibits substrate-dependent heparin activation. Drug-mediated inhibition leads to a delay of the oscillations with the magnitude of this effect dependent upon the timing of drug administration. Inhibited by phosphorylation. In terms of biological role, essential serine/threonine-protein kinase that regulates diverse cellular growth and survival processes including Wnt signaling, DNA repair and circadian rhythms. It can phosphorylate a large number of proteins. Casein kinases are operationally defined by their preferential utilization of acidic proteins such as caseins as substrates. Phosphorylates connexin-43/GJA1, MAP1A, SNAPIN, MAPT/TAU, TOP2A, DCK, HIF1A, EIF6, p53/TP53, DVL2, DVL3, ESR1, AIB1/NCOA3, DNMT1, PKD2, YAP1, PER1 and PER2. Central component of the circadian clock. In balance with PP1, determines the circadian period length through the regulation of the speed and rhythmicity of PER1 and PER2 phosphorylation. Controls PER1 and PER2 nuclear transport and degradation. YAP1 phosphorylation promotes its SCF(beta-TRCP) E3 ubiquitin ligase-mediated ubiquitination and subsequent degradation. DNMT1 phosphorylation reduces its DNA-binding activity. Phosphorylation of ESR1 and AIB1/NCOA3 stimulates their activity and coactivation. Phosphorylation of DVL2 and DVL3 regulates WNT3A signaling pathway that controls neurite outgrowth. Phosphorylates NEDD9/HEF1. EIF6 phosphorylation promotes its nuclear export. Triggers down-regulation of dopamine receptors in the forebrain. Activates DCK in vitro by phosphorylation. TOP2A phosphorylation favors DNA cleavable complex formation. May regulate the formation of the mitotic spindle apparatus in extravillous trophoblast. Modulates connexin-43/GJA1 gap junction assembly by phosphorylation. Probably involved in lymphocyte physiology. Regulates fast synaptic transmission mediated by glutamate. This is Casein kinase I isoform delta (CSNK1D) from Pongo abelii (Sumatran orangutan).